The sequence spans 135 residues: Protein E6 (135 aa).

2 zinc fingers span residues 11–47 (CIWCKKGLDKVDAKRCHEKKIRIACRNGKHCAVCTSC) and 83–119 (CMYCGGCLTRDEKERHRLFCEDFWIFRHQVRGRCYLC).

It belongs to the papillomaviridae E6 protein family. As to quaternary structure, forms homodimers. Interacts with ubiquitin-protein ligase UBE3A/E6-AP; this interaction stimulates UBE3A ubiquitin activity. Interacts with host BAK1.

It localises to the host cytoplasm. The protein resides in the host nucleus. Its function is as follows. Plays a major role in the induction and maintenance of cellular transformation. E6 associates with host UBE3A/E6-AP ubiquitin-protein ligase and modulates its activity. Protects host keratinocytes from apoptosis by mediating the degradation of host BAK1. May also inhibit host immune response. This Cervus elaphus (Red deer) protein is Protein E6.